The sequence spans 275 residues: Malonyl-[acyl-carrier protein] O-methyltransferase (275 aa).

This sequence belongs to the methyltransferase superfamily.

It carries out the reaction malonyl-[ACP] + S-adenosyl-L-methionine = malonyl-[ACP] methyl ester + S-adenosyl-L-homocysteine. It functions in the pathway cofactor biosynthesis; biotin biosynthesis. Converts the free carboxyl group of a malonyl-thioester to its methyl ester by transfer of a methyl group from S-adenosyl-L-methionine (SAM). It allows to synthesize pimeloyl-ACP via the fatty acid synthetic pathway. This is Malonyl-[acyl-carrier protein] O-methyltransferase from Methylococcus capsulatus (strain ATCC 33009 / NCIMB 11132 / Bath).